The primary structure comprises 367 residues: UDP-N-acetylglucosamine--N-acetylmuramyl-(pentapeptide) pyrophosphoryl-undecaprenol N-acetylglucosamine transferase (367 aa).

UDP-N-acetyl-alpha-D-glucosamine is bound by residues Thr-13–Gly-15, Asn-125, Arg-165, Ser-192, and Gln-293.

Belongs to the glycosyltransferase 28 family. MurG subfamily.

The protein localises to the cell inner membrane. The enzyme catalyses di-trans,octa-cis-undecaprenyl diphospho-N-acetyl-alpha-D-muramoyl-L-alanyl-D-glutamyl-meso-2,6-diaminopimeloyl-D-alanyl-D-alanine + UDP-N-acetyl-alpha-D-glucosamine = di-trans,octa-cis-undecaprenyl diphospho-[N-acetyl-alpha-D-glucosaminyl-(1-&gt;4)]-N-acetyl-alpha-D-muramoyl-L-alanyl-D-glutamyl-meso-2,6-diaminopimeloyl-D-alanyl-D-alanine + UDP + H(+). It participates in cell wall biogenesis; peptidoglycan biosynthesis. Its function is as follows. Cell wall formation. Catalyzes the transfer of a GlcNAc subunit on undecaprenyl-pyrophosphoryl-MurNAc-pentapeptide (lipid intermediate I) to form undecaprenyl-pyrophosphoryl-MurNAc-(pentapeptide)GlcNAc (lipid intermediate II). In Jannaschia sp. (strain CCS1), this protein is UDP-N-acetylglucosamine--N-acetylmuramyl-(pentapeptide) pyrophosphoryl-undecaprenol N-acetylglucosamine transferase.